Reading from the N-terminus, the 321-residue chain is Carnitine monooxygenase reductase subunit (321 aa).

The 106-residue stretch at 4–109 folds into the FAD-binding FR-type domain; that stretch reads YQMFEVQVSQ…STPNNLFALI (106 aa). Residues 233–321 enclose the 2Fe-2S ferredoxin-type domain; the sequence is DAFTLVLARS…AKGKRLVLDL (89 aa). Residues Cys-270, Cys-275, Cys-278, and Cys-308 each contribute to the [2Fe-2S] cluster site.

The protein belongs to the PDR/VanB family. CntB subfamily. As to quaternary structure, composed of an oxygenase subunit (yeaW) and a reductase subunit (yeaX). The cofactor is FMN. Requires [2Fe-2S] cluster as cofactor.

The enzyme catalyses (R)-carnitine + NADH + O2 + H(+) = (3R)-3-hydroxy-4-oxobutanoate + trimethylamine + NAD(+) + H2O. It catalyses the reaction (R)-carnitine + NADPH + O2 + H(+) = (3R)-3-hydroxy-4-oxobutanoate + trimethylamine + NADP(+) + H2O. The protein operates within amine and polyamine metabolism; carnitine metabolism. Functionally, converts carnitine to trimethylamine and malic semialdehyde. Can also use gamma-butyrobetaine, choline and betaine as substrates. The polypeptide is Carnitine monooxygenase reductase subunit (yeaX) (Escherichia coli (strain K12)).